Reading from the N-terminus, the 553-residue chain is MRSDTIKKGVERTPHRALIKGTGVPQSQMDKPFIGVATSFTDLIPGHVGMRDLERFIEKGIHSGGGYAFFFGIPGVCDGISMGHKGMHYSLPTRELIADMVESVAEAHRLDGLVLLTNCDKITPGMLMAAARLNIPSIVVTAGPMMAGRGTEGRRYSFVTDTFEAMARYKAGVIDERELGVCEDNACPGMGSCQGLFTANTMAILTETMGMSLPRCGTALAVSALKRRIAFASGEKIVDLVRNDITPRQILTRDAFENAIRVDLALGGSSNTVLHLLAIAREAGVDLPLETFDTLAKETPQISSMNPAGEYFMEDLDAGGGVMGVLRQLGSLVRDNPTVMGLSTLQLASTVESVDERVIRPLSNPVKKEGGIAVLFGNLAPKGAVVKQSGVSDAMMTFEGTARCFDSEEAAMAALMGGRIVAGDVVVIRYEGPKGGPGMREMLAPTATLMGLGLGDSVALITDGRFSGGTRGPCIGHISPEAAEGGPIALVEEGDRILLDIPNRRLELLVDEAVLQERRARWTAPEPKIKTGWLARYAKVVTSAYTGAVTSAD.

Residue D78 coordinates Mg(2+). Residue C119 coordinates [2Fe-2S] cluster. Positions 120 and 121 each coordinate Mg(2+). At K121 the chain carries N6-carboxylysine. C193 lines the [2Fe-2S] cluster pocket. E441 is a Mg(2+) binding site. Residue S467 is the Proton acceptor of the active site.

It belongs to the IlvD/Edd family. In terms of assembly, homodimer. [2Fe-2S] cluster serves as cofactor. Mg(2+) is required as a cofactor.

It catalyses the reaction (2R)-2,3-dihydroxy-3-methylbutanoate = 3-methyl-2-oxobutanoate + H2O. The enzyme catalyses (2R,3R)-2,3-dihydroxy-3-methylpentanoate = (S)-3-methyl-2-oxopentanoate + H2O. It participates in amino-acid biosynthesis; L-isoleucine biosynthesis; L-isoleucine from 2-oxobutanoate: step 3/4. The protein operates within amino-acid biosynthesis; L-valine biosynthesis; L-valine from pyruvate: step 3/4. Its function is as follows. Functions in the biosynthesis of branched-chain amino acids. Catalyzes the dehydration of (2R,3R)-2,3-dihydroxy-3-methylpentanoate (2,3-dihydroxy-3-methylvalerate) into 2-oxo-3-methylpentanoate (2-oxo-3-methylvalerate) and of (2R)-2,3-dihydroxy-3-methylbutanoate (2,3-dihydroxyisovalerate) into 2-oxo-3-methylbutanoate (2-oxoisovalerate), the penultimate precursor to L-isoleucine and L-valine, respectively. The protein is Dihydroxy-acid dehydratase of Geobacter sulfurreducens (strain ATCC 51573 / DSM 12127 / PCA).